A 953-amino-acid polypeptide reads, in one-letter code: Valine--tRNA ligase (953 aa).

Residues 42 to 52 (PNVTGSLHMGH) carry the 'HIGH' region motif. A 'KMSKS' region motif is present at residues 554–558 (KMSKS). ATP is bound at residue K557. Residues 884 to 952 (LIDKDAELDR…LEQQKATIAA (69 aa)) are a coiled coil.

It belongs to the class-I aminoacyl-tRNA synthetase family. ValS type 1 subfamily. In terms of assembly, monomer.

The protein resides in the cytoplasm. It carries out the reaction tRNA(Val) + L-valine + ATP = L-valyl-tRNA(Val) + AMP + diphosphate. Its function is as follows. Catalyzes the attachment of valine to tRNA(Val). As ValRS can inadvertently accommodate and process structurally similar amino acids such as threonine, to avoid such errors, it has a 'posttransfer' editing activity that hydrolyzes mischarged Thr-tRNA(Val) in a tRNA-dependent manner. In Vibrio cholerae serotype O1 (strain ATCC 39315 / El Tor Inaba N16961), this protein is Valine--tRNA ligase.